The primary structure comprises 393 residues: S-adenosylmethionine synthase (393 aa).

Histidine 17 provides a ligand contact to ATP. Aspartate 19 is a binding site for Mg(2+). Glutamate 45 serves as a coordination point for K(+). Glutamate 58 and glutamine 106 together coordinate L-methionine. Residues 106 to 116 (QSAHIAQGVNA) are flexible loop. ATP is bound by residues 171–173 (DAK), 237–238 (KF), aspartate 246, 252–253 (RK), alanine 269, and lysine 273. Aspartate 246 contacts L-methionine. An L-methionine-binding site is contributed by lysine 277.

It belongs to the AdoMet synthase family. In terms of assembly, homotetramer; dimer of dimers. Mg(2+) serves as cofactor. K(+) is required as a cofactor.

The protein localises to the cytoplasm. The enzyme catalyses L-methionine + ATP + H2O = S-adenosyl-L-methionine + phosphate + diphosphate. The protein operates within amino-acid biosynthesis; S-adenosyl-L-methionine biosynthesis; S-adenosyl-L-methionine from L-methionine: step 1/1. Catalyzes the formation of S-adenosylmethionine (AdoMet) from methionine and ATP. The overall synthetic reaction is composed of two sequential steps, AdoMet formation and the subsequent tripolyphosphate hydrolysis which occurs prior to release of AdoMet from the enzyme. This chain is S-adenosylmethionine synthase, found in Ruegeria pomeroyi (strain ATCC 700808 / DSM 15171 / DSS-3) (Silicibacter pomeroyi).